Reading from the N-terminus, the 167-residue chain is MLPMITGFMNYGQQTLRAARYIGQGFMITLSHTNRLPVTIQYPYEKLITSERFRGRIHFEFDKCIACEVCVRVCPIDLPVVDWKLETNIRKKRLLNYSIDFGICIFCGNCVEYCPTNCLSMTEEYEFSTYDRHELNYNQIALGRLPMSVMDDYTIRTIWNSPQTKNG.

4Fe-4S ferredoxin-type domains lie at 55-84 (GRIHFEFDKCIACEVCVRVCPIDLPVVDWK) and 95-124 (LNYSIDFGICIFCGNCVEYCPTNCLSMTEE). [4Fe-4S] cluster is bound by residues C64, C67, C70, C74, C104, C107, C110, and C114.

It belongs to the complex I 23 kDa subunit family. In terms of assembly, NDH is composed of at least 16 different subunits, 5 of which are encoded in the nucleus. It depends on [4Fe-4S] cluster as a cofactor.

It is found in the plastid. Its subcellular location is the chloroplast thylakoid membrane. It carries out the reaction a plastoquinone + NADH + (n+1) H(+)(in) = a plastoquinol + NAD(+) + n H(+)(out). The catalysed reaction is a plastoquinone + NADPH + (n+1) H(+)(in) = a plastoquinol + NADP(+) + n H(+)(out). Its function is as follows. NDH shuttles electrons from NAD(P)H:plastoquinone, via FMN and iron-sulfur (Fe-S) centers, to quinones in the photosynthetic chain and possibly in a chloroplast respiratory chain. The immediate electron acceptor for the enzyme in this species is believed to be plastoquinone. Couples the redox reaction to proton translocation, and thus conserves the redox energy in a proton gradient. This is NAD(P)H-quinone oxidoreductase subunit I, chloroplastic from Draba nemorosa (Woodland whitlowgrass).